The chain runs to 404 residues: Snake venom metalloproteinase H5 (404 aa).

A signal peptide spans 1-6 (FPYQGS). Residues 7 to 177 (SIMLESGKVN…KPSWVNLTPK (171 aa)) constitute a propeptide that is removed on maturation. Residues 184-379 (TSVNLQLVVD…KKPKCIHKKS (196 aa)) form the Peptidase M12B domain. 3 cysteine pairs are disulfide-bonded: C295–C374, C336–C358, and C338–C341. H320 serves as a coordination point for Zn(2+). E321 is a catalytic residue. Zn(2+) is bound by residues H324 and H330. A propeptide spanning residues 379–404 (SLKTDTVSTSVSGNEPLDDNVDGFHA) is cleaved from the precursor. Residues 385–404 (VSTSVSGNEPLDDNVDGFHA) are disordered. Residues 394–404 (PLDDNVDGFHA) show a composition bias toward acidic residues.

Monomer. Zn(2+) is required as a cofactor. Expressed by the venom gland.

Its subcellular location is the secreted. Its function is as follows. This probable venom zinc protease is not hemorrhagic when 3 ug are injected onto the back skin of guinea pig. This Deinagkistrodon acutus (Hundred-pace snake) protein is Snake venom metalloproteinase H5.